A 62-amino-acid polypeptide reads, in one-letter code: Large ribosomal subunit protein eL37 (62 aa).

Cys-20, Cys-23, Cys-35, and Cys-38 together coordinate Zn(2+). Residues Cys-20 to Cys-38 form a C4-type zinc finger.

It belongs to the eukaryotic ribosomal protein eL37 family. Zn(2+) is required as a cofactor.

In terms of biological role, binds to the 23S rRNA. This is Large ribosomal subunit protein eL37 from Methanopyrus kandleri (strain AV19 / DSM 6324 / JCM 9639 / NBRC 100938).